A 575-amino-acid chain; its full sequence is Transcription factor ncaA (575 aa).

Composition is skewed to polar residues over residues 1-15 (MAET…TPEN) and 22-34 (DNQS…SKNP). Disordered stretches follow at residues 1-40 (MAET…VKDR) and 79-114 (IRSG…AGGE). The segment at 39–66 (DRKCQYCHQAFTSSSLGRHLDQYLFKKK) adopts a UBZ4-type; degenerate zinc-finger fold. Residues 93-102 (GKRDTPERAM) are compositionally biased toward basic and acidic residues. Residues 337 to 371 (FAREVEKRKTLDEQLARVQQEANQLRAQVEKLGSC) adopt a coiled-coil conformation. The segment at 429–575 (GRVGVGYGNP…ASGPPPSSGA (147 aa)) is disordered. Positions 440–454 (LDDRSSADTKARATE) are enriched in basic and acidic residues. The segment covering 455 to 471 (EPPASAALASTSTSAPP) has biased composition (low complexity). Positions 472–485 (SAHPPPRALQPAPG) are enriched in pro residues. 2 stretches are compositionally biased toward polar residues: residues 493 to 513 (DQSS…TSPY) and 538 to 558 (SAAN…HQSL).

Interacts with atrR.

It is found in the nucleus. Transcription factor required for normal voriconazole resistance. Contributes to the function of atrR and regulates the expression of the atrR target gene abcG1. In Aspergillus fumigatus (strain ATCC MYA-4609 / CBS 101355 / FGSC A1100 / Af293) (Neosartorya fumigata), this protein is Transcription factor ncaA.